The chain runs to 320 residues: Ferrochelatase (320 aa).

Fe cation contacts are provided by His194 and Glu275.

It belongs to the ferrochelatase family. In terms of assembly, monomer.

It is found in the cytoplasm. The enzyme catalyses heme b + 2 H(+) = protoporphyrin IX + Fe(2+). It participates in porphyrin-containing compound metabolism; protoheme biosynthesis; protoheme from protoporphyrin-IX: step 1/1. Catalyzes the ferrous insertion into protoporphyrin IX. The polypeptide is Ferrochelatase (Salmonella typhi).